We begin with the raw amino-acid sequence, 309 residues long: Putative rhizopine-binding protein (309 aa).

The first 20 residues, 1-20 (MKKFIIGIAAAVLVSTAAHA), serve as a signal peptide directing secretion.

The protein belongs to the bacterial solute-binding protein 2 family.

Its subcellular location is the periplasm. Its function is as follows. Involved in rhizopine (L-3-O-methyl-scyllo-inosamine) catabolism. Could be involved in its high affinity transport. The chain is Putative rhizopine-binding protein (mocB) from Rhizobium meliloti (Ensifer meliloti).